The chain runs to 197 residues: Holliday junction branch migration complex subunit RuvA (197 aa).

The segment at 1–63 (MYAYLKGIIT…EDAHLLYGFR (63 aa)) is domain I. Residues 64–142 (SEDEKKLFLS…VAGDDLPAKV (79 aa)) are domain II. The flexible linker stretch occupies residues 143–147 (AVQAS). Positions 148-197 (AENQELEEAMEAMLALGYKATELKKIKKFFEGTTDTAENYIKSALKMLVK) are domain III.

Belongs to the RuvA family. As to quaternary structure, homotetramer. Forms an RuvA(8)-RuvB(12)-Holliday junction (HJ) complex. HJ DNA is sandwiched between 2 RuvA tetramers; dsDNA enters through RuvA and exits via RuvB. An RuvB hexamer assembles on each DNA strand where it exits the tetramer. Each RuvB hexamer is contacted by two RuvA subunits (via domain III) on 2 adjacent RuvB subunits; this complex drives branch migration. In the full resolvosome a probable DNA-RuvA(4)-RuvB(12)-RuvC(2) complex forms which resolves the HJ.

It localises to the cytoplasm. Its function is as follows. The RuvA-RuvB-RuvC complex processes Holliday junction (HJ) DNA during genetic recombination and DNA repair, while the RuvA-RuvB complex plays an important role in the rescue of blocked DNA replication forks via replication fork reversal (RFR). RuvA specifically binds to HJ cruciform DNA, conferring on it an open structure. The RuvB hexamer acts as an ATP-dependent pump, pulling dsDNA into and through the RuvAB complex. HJ branch migration allows RuvC to scan DNA until it finds its consensus sequence, where it cleaves and resolves the cruciform DNA. This Streptococcus pneumoniae (strain Hungary19A-6) protein is Holliday junction branch migration complex subunit RuvA.